The sequence spans 471 residues: UDP-N-acetylmuramate--L-alanine ligase (471 aa).

Position 122–128 (122–128 (GTHGKTT)) interacts with ATP.

This sequence belongs to the MurCDEF family.

Its subcellular location is the cytoplasm. It carries out the reaction UDP-N-acetyl-alpha-D-muramate + L-alanine + ATP = UDP-N-acetyl-alpha-D-muramoyl-L-alanine + ADP + phosphate + H(+). It functions in the pathway cell wall biogenesis; peptidoglycan biosynthesis. In terms of biological role, cell wall formation. This Cutibacterium acnes (strain DSM 16379 / KPA171202) (Propionibacterium acnes) protein is UDP-N-acetylmuramate--L-alanine ligase.